The following is a 244-amino-acid chain: Monothiol glutaredoxin-4 (244 aa).

One can recognise a Thioredoxin domain in the interval 3–110 (VVEIKSQDQF…FVKSLEILSN (108 aa)). Residues 116 to 143 (ANNAKGPKSTSDEESSGSSDDEEDETEE) are disordered. Positions 127–143 (DEESSGSSDDEEDETEE) are enriched in acidic residues. In terms of domain architecture, Glutaredoxin spans 146 to 244 (NARLVKLVQA…DPEYFQHALQ (99 aa)). Lys163 provides a ligand contact to glutathione. Cys171 is a [2Fe-2S] cluster binding site. Glutathione-binding positions include Arg200, Phe212, and 225-226 (LD).

The protein belongs to the glutaredoxin family. Monothiol subfamily. As to quaternary structure, homodimer. Heterodimer with FRA2.

Monothiol glutaredoxin involved in the biogenesis of iron-sulfur clusters. Binds one iron-sulfur cluster per dimer. The iron-sulfur cluster is bound between subunits, and is complexed by a bound glutathione and a cysteine residue from each subunit. The polypeptide is Monothiol glutaredoxin-4 (GRX4) (Saccharomyces cerevisiae (strain ATCC 204508 / S288c) (Baker's yeast)).